A 184-amino-acid chain; its full sequence is Thymidine kinase (184 aa).

Residues 10–17 (GPMYSGKT), His53, and 83–86 (DEVQ) contribute to the ATP site. Glu84 (proton acceptor) is an active-site residue. His115 contributes to the substrate binding site. The Zn(2+) site is built by Cys140 and Cys143. Substrate-binding positions include 161 to 164 (IDVG) and Tyr169. The Zn(2+) site is built by Cys173 and Cys176.

The protein belongs to the thymidine kinase family. In terms of assembly, homotetramer.

It is found in the cytoplasm. The catalysed reaction is thymidine + ATP = dTMP + ADP + H(+). In Thermotoga maritima (strain ATCC 43589 / DSM 3109 / JCM 10099 / NBRC 100826 / MSB8), this protein is Thymidine kinase (tdk).